The following is a 464-amino-acid chain: Serine/threonine-protein kinase 38-like (464 aa).

At Ala-2 the chain carries N-acetylalanine. The segment at 64–89 is S100B binding; sequence KLRRSQHARKETEFLRLKRTRLGLDD. Position 75 is a phosphothreonine (Thr-75). In terms of domain architecture, Protein kinase spans 90–383; that stretch reads FESLKVIGRG…VEEIKGHPFF (294 aa). ATP contacts are provided by residues 96–104 and Lys-119; that span reads IGRGAFGEV. The active-site Proton acceptor is the Asp-213. A Phosphoserine; by autocatalysis modification is found at Ser-282. One can recognise an AGC-kinase C-terminal domain in the interval 384-453; sequence EGVDWGHIRE…KRFEGLTQRG (70 aa). Thr-442 carries the phosphothreonine; by STK24/MST3 modification.

This sequence belongs to the protein kinase superfamily. AGC Ser/Thr protein kinase family. In terms of assembly, homodimeric S100B binds two molecules of STK38L. Interacts with MOB1 and MOB2. Interacts with MICAL1; leading to inhibit the protein kinase activity by antagonizing activation by MST1/STK4. Mg(2+) serves as cofactor. Highly expressed in the large and small intestine, stomach and testis. High levels also present in the brain, in particular the neurocortex, basal forebrain, hippocampus, the amygdala, cerebellum and brainstem.

It is found in the cytoplasm. It localises to the cytoskeleton. Its subcellular location is the membrane. The enzyme catalyses L-seryl-[protein] + ATP = O-phospho-L-seryl-[protein] + ADP + H(+). The catalysed reaction is L-threonyl-[protein] + ATP = O-phospho-L-threonyl-[protein] + ADP + H(+). Its activity is regulated as follows. Activated by binding of S100B which releases autoinhibitory N-lobe interactions, enabling ATP to bind and the autophosphorylation of Ser-282. Thr-442 then undergoes calcium-dependent phosphorylation by STK24/MST3. Interactions between phosphorylated Thr-442 and the N-lobe promote additional structural changes that complete the activation of the kinase. Autoinhibition is also released by the binding of MOB1/MOBKL1A and MOB2 to the N-terminal of STK38L. Functionally, involved in the regulation of structural processes in differentiating and mature neuronal cells. The chain is Serine/threonine-protein kinase 38-like from Mus musculus (Mouse).